The primary structure comprises 1247 residues: Probable phosphorylase b kinase regulatory subunit alpha (1247 aa).

Residues 853–883 (LKGLYEKACQQKLWGLVRHTAGMLGKRVEDL) are calmodulin-binding. A phosphoserine mark is found at Ser1030 and Ser1033. Residues 1052-1089 (DRQGQWLRRRRLDGALNRVPRDFYSRVWTVLEKCQGLA) form a calmodulin-binding region. A lipid anchor (S-farnesyl cysteine) is attached at Cys1244.

This sequence belongs to the phosphorylase b kinase regulatory chain family. Post-translationally, although the final Cys may be farnesylated, the terminal tripeptide is probably not removed, and the C-terminus is not methylated.

The protein resides in the cell membrane. Its pathway is glycan biosynthesis; glycogen metabolism. Phosphorylase b kinase catalyzes the phosphorylation of serine in certain substrates, including troponin I. The alpha chain may bind calmodulin. The polypeptide is Probable phosphorylase b kinase regulatory subunit alpha (Drosophila melanogaster (Fruit fly)).